A 590-amino-acid polypeptide reads, in one-letter code: Interferon alpha/beta receptor 1 (590 aa).

The N-terminal stretch at 1–26 is a signal peptide; that stretch reads MLAVVGAAALVLVAGAPWVLPSAAGG. The Extracellular segment spans residues 27-429; the sequence is ENLKPPENID…EKTRPGSFST (403 aa). Fibronectin type-III domains follow at residues 31 to 125, 127 to 226, 230 to 327, and 332 to 425; these read PPEN…PFYT, HMSP…TTVA, PVPG…FIDS, and LPPP…TRPG. N-linked (GlcNAc...) asparagine glycosylation occurs at asparagine 43. The cysteines at positions 78 and 86 are disulfide-linked. Residues asparagine 109, asparagine 181, and asparagine 214 are each glycosylated (N-linked (GlcNAc...) asparagine). Intrachain disulfides connect cysteine 199–cysteine 220 and cysteine 284–cysteine 292. Asparagine 314, asparagine 370, asparagine 409, and asparagine 413 each carry an N-linked (GlcNAc...) asparagine glycan. A disulfide bridge connects residues cysteine 397 and cysteine 419. A helical membrane pass occupies residues 430–449; it reads IWIITGLGVVFFSVMVLYAL. At 450-590 the chain is on the cytoplasmic side; sequence RSVWKYLCHV…ALRTEPALLC (141 aa). The segment at 483–492 is important for interaction with TYK2; the sequence is VLLTAEEHTE. Residues 514 to 545 form a disordered region; it reads DLRKYSSQTSQDSGNYSNEEEESVGTESGQAV. A Glycyl lysine isopeptide (Lys-Gly) (interchain with G-Cter in ubiquitin) cross-link involves residue lysine 517. Over residues 518–530 the composition is skewed to polar residues; the sequence is YSSQTSQDSGNYS. At serine 526 the chain carries Phosphoserine.

The protein belongs to the type II cytokine receptor family. Heterodimer with IFNAR2; forming the receptor for type I interferon. Interacts with TYK2. Interacts with STAT1 and STAT2. Interacts (serine-phosphorylated form) with FBXW11, the substrate recognition component of a SCF (SKP1-CUL1-F-box protein) E3 ubiquitin-protein ligase complex. 3Interacts with SHMT2; this promotes interaction with ABRAXAS2 and the BRISC complex. Interacts with TRIM10; this interaction prevents association between IFNAR1 and TYK2. Ubiquitinated. This leads to its internalization and lysosomal degradation. The 'Lys-63'-linked ubiquitin chains are cleaved off by the BRISC complex; this prevents receptor internalization and degradation. Probable ubiquitination sites have been identified in human, but are poorly conserved across species. Post-translationally, phosphorylated on serine residues in response to interferon binding; this promotes interaction with FBXW11 and ubiquitination.

The protein resides in the cell membrane. The protein localises to the late endosome. Its subcellular location is the lysosome. Together with IFNAR2, forms the heterodimeric receptor for type I interferons (including interferons alpha, beta, epsilon, omega and kappa). Type I interferon binding activates the JAK-STAT signaling cascade, and triggers tyrosine phosphorylation of a number of proteins including JAKs, TYK2, STAT proteins and the IFNR alpha- and beta-subunits themselves. STAT proteins are then phosphorylated by the JAKs, promoting their translocation into the nucleus to regulate expression of interferon-regulated genes. Can also act independently of IFNAR2: form an active IFNB1 receptor by itself and activate a signaling cascade that does not involve activation of the JAK-STAT pathway. This is Interferon alpha/beta receptor 1 (Ifnar1) from Mus musculus (Mouse).